A 305-amino-acid chain; its full sequence is D-alanine--D-alanine ligase (305 aa).

The ATP-grasp domain maps to 107 to 299 (KKMLCYHGIA…FDELVERILA (193 aa)). ATP is bound at residue 134-186 (PDYPLVVKPAREGSTIGISIVHDEQELAAGLEEAFRHDDLVLVEQFIAGAEVT). Residues Asp254, Glu266, and Asn268 each coordinate Mg(2+).

Belongs to the D-alanine--D-alanine ligase family. Mg(2+) serves as cofactor. Mn(2+) is required as a cofactor.

The protein localises to the cytoplasm. The enzyme catalyses 2 D-alanine + ATP = D-alanyl-D-alanine + ADP + phosphate + H(+). It functions in the pathway cell wall biogenesis; peptidoglycan biosynthesis. Its function is as follows. Cell wall formation. This Syntrophotalea carbinolica (strain DSM 2380 / NBRC 103641 / GraBd1) (Pelobacter carbinolicus) protein is D-alanine--D-alanine ligase.